The chain runs to 713 residues: Polyribonucleotide nucleotidyltransferase (713 aa).

The Mg(2+) site is built by D487 and D493. The KH domain occupies P554–I613. The 69-residue stretch at G623 to K691 folds into the S1 motif domain.

It belongs to the polyribonucleotide nucleotidyltransferase family. Mg(2+) is required as a cofactor.

The protein resides in the cytoplasm. The catalysed reaction is RNA(n+1) + phosphate = RNA(n) + a ribonucleoside 5'-diphosphate. Its function is as follows. Involved in mRNA degradation. Catalyzes the phosphorolysis of single-stranded polyribonucleotides processively in the 3'- to 5'-direction. This is Polyribonucleotide nucleotidyltransferase from Agrobacterium fabrum (strain C58 / ATCC 33970) (Agrobacterium tumefaciens (strain C58)).